Consider the following 330-residue polypeptide: Protein qutG (330 aa).

Residues glutamate 78, aspartate 100, leucine 102, aspartate 103, and aspartate 251 each coordinate Mg(2+). Substrate is bound at residue glutamate 78. Substrate-binding positions include 102–105 (LDGT) and aspartate 251.

Belongs to the inositol monophosphatase superfamily.

Its function is as follows. Not known. Probably involved in quinate metabolism. This Emericella nidulans (strain FGSC A4 / ATCC 38163 / CBS 112.46 / NRRL 194 / M139) (Aspergillus nidulans) protein is Protein qutG (qutG).